A 687-amino-acid chain; its full sequence is Fork-head transcriptional regulator 2 (687 aa).

The tract at residues methionine 1–proline 23 is disordered. The 65-residue stretch at valine 82 to valine 146 folds into the FHA domain. Over residues serine 226–glutamine 241 the composition is skewed to polar residues. The interval serine 226–glutamate 246 is disordered. A DNA-binding region (fork-head) is located at residues lysine 252 to arginine 350. 3 disordered regions span residues alanine 385 to proline 449, glutamine 472 to asparagine 569, and proline 584 to serine 687. Positions proline 389–proline 410 are enriched in low complexity. Residues histidine 411–asparagine 442 show a composition bias toward polar residues. Low complexity predominate over residues glutamine 472 to glutamine 490. Residues serine 491–glutamate 540 are compositionally biased toward polar residues. 2 stretches are compositionally biased toward low complexity: residues serine 542 to asparagine 563 and lysine 589 to asparagine 624. Positions glutamine 625–leucine 659 are enriched in polar residues. Residues isoleucine 663–aspartate 670 carry the Nuclear localization signal motif.

It is found in the nucleus. Its function is as follows. Transcription factor required for the morphogenesis of true hyphal as well as yeast cells. Contributes to virulence. This Candida albicans (strain SC5314 / ATCC MYA-2876) (Yeast) protein is Fork-head transcriptional regulator 2 (FKH2).